We begin with the raw amino-acid sequence, 422 residues long: Serine protease HTRA2, mitochondrial (422 aa).

The transit peptide at 1–17 directs the protein to the mitochondrion; it reads MALRGSHRLEVIFKRCI. A propeptide spanning residues 18–74 is cleaved from the precursor; sequence ASPVLHSQAGNRRSSQLAIKGVDPNSNGNSGQYQQNGEHKEKGWRRLVRFFVPFSLG. A disordered region spans residues 28 to 55; that stretch reads NRRSSQLAIKGVDPNSNGNSGQYQQNGE. Residues 42–53 are compositionally biased toward low complexity; it reads NSNGNSGQYQQN. A helical transmembrane segment spans residues 64–82; sequence LVRFFVPFSLGAAVSAAII. 2 consecutive short sequence motifs (IAP-binding) follow at residues 75-78 and 94-97; these read AAVS and SKMT. Residues 139-302 form a serine protease region; it reads SNGSGFIIEQ…IPIDYVKVFL (164 aa). Catalysis depends on charge relay system residues histidine 157, aspartate 189, and serine 266. The PDZ domain maps to 325 to 410; that stretch reads MGITMLTLTP…TLDIVILRGV (86 aa).

This sequence belongs to the peptidase S1C family. As to quaternary structure, interacts with th/DIAP1 (via BIR 2 domain).

Its subcellular location is the mitochondrion intermembrane space. The protein localises to the mitochondrion membrane. It catalyses the reaction Cleavage of non-polar aliphatic amino-acids at the P1 position, with a preference for Val, Ile and Met. At the P2 and P3 positions, Arg is selected most strongly with a secondary preference for other hydrophilic residues.. Functionally, serine protease that shows proteolytic activity against a non-specific substrate beta-casein. Promotes or induces cell death either by direct binding to and inhibition of BIRC proteins (also called inhibitor of apoptosis proteins, IAPs), leading to an increase in caspase activity, or by a BIRC inhibition-independent, caspase-independent and serine protease activity-dependent mechanism. Can antagonize antiapoptotic activity of th/Diap1 by directly inducing the degradation of th/Diap1. This is Serine protease HTRA2, mitochondrial from Drosophila sechellia (Fruit fly).